The chain runs to 265 residues: 14-3-3-like protein GF14-D (265 aa).

Residues 244–265 (DANDDGGDEIKEAAAPKEPGDQ) form a disordered region. Positions 251–265 (DEIKEAAAPKEPGDQ) are enriched in basic and acidic residues.

It belongs to the 14-3-3 family. Interacts with BZR1. Interacts with ABI5.

In terms of biological role, is associated with a DNA binding complex that binds to the G box, a well-characterized cis-acting DNA regulatory element found in plant genes. The protein is 14-3-3-like protein GF14-D (GF14D) of Oryza sativa subsp. japonica (Rice).